We begin with the raw amino-acid sequence, 264 residues long: Indole-3-glycerol phosphate synthase (264 aa).

Belongs to the TrpC family.

The enzyme catalyses 1-(2-carboxyphenylamino)-1-deoxy-D-ribulose 5-phosphate + H(+) = (1S,2R)-1-C-(indol-3-yl)glycerol 3-phosphate + CO2 + H2O. It participates in amino-acid biosynthesis; L-tryptophan biosynthesis; L-tryptophan from chorismate: step 4/5. This chain is Indole-3-glycerol phosphate synthase, found in Xylella fastidiosa (strain M12).